The sequence spans 178 residues: MADGKAGEEKPEKPQRAGAAGGPEEEAEKPVKTKTVSSSNGGESSSRSAEKRSAEDEAADLPTKPTKMSKFGFAIGSQTARKASAISIRLGASKPKETVPTLAPKTLSVAAAFNEDEDSEPEEMPPEAKMRMKNIGRDTPTSAGPNSFNKGKHGFSDNQKLWERNIKSHLGNVHDQDN.

The span at 1–15 (MADGKAGEEKPEKPQ) shows a compositional bias: basic and acidic residues. The segment at 1–82 (MADGKAGEEK…FAIGSQTARK (82 aa)) is disordered. N-acetylalanine is present on Ala-2. The span at 37–47 (SSSNGGESSSR) shows a compositional bias: low complexity. Ser-53 carries the post-translational modification Phosphoserine. Lys-64 bears the N6-acetyllysine mark. 3 positions are modified to phosphoserine: Ser-77, Ser-87, and Ser-119. Positions 134–158 (NIGRDTPTSAGPNSFNKGKHGFSDN) are disordered. At Thr-139 the chain carries Phosphothreonine. Positions 139-149 (TPTSAGPNSFN) are enriched in polar residues. Residue Ser-147 is modified to Phosphoserine. Lys-150 and Lys-152 each carry N6-acetyllysine.

Interacts with UHRF2/NIRF. Ubiquitinated; mediated by UHRF2 and leading to its subsequent proteasomal degradation. In terms of processing, N-terminally acetylated in a HYPK-dependent manner by the NatA acetyltransferase complex which is composed of NAA10 and NAA15.

The protein localises to the nucleus. May be involved in cell cycle regulation. The chain is PEST proteolytic signal-containing nuclear protein (Pcnp) from Mus musculus (Mouse).